The following is a 390-amino-acid chain: Homoserine O-succinyltransferase (390 aa).

Residues 59-369 enclose the AB hydrolase-1 domain; the sequence is NAVLVCHALN…PHGHDAFLLD (311 aa). Serine 165 acts as the Nucleophile in catalysis. Arginine 235 is a binding site for substrate. Active-site residues include aspartate 330 and histidine 363. Substrate is bound at residue aspartate 364.

The protein belongs to the AB hydrolase superfamily. MetX family. As to quaternary structure, homodimer.

It localises to the cytoplasm. It carries out the reaction L-homoserine + succinyl-CoA = O-succinyl-L-homoserine + CoA. The protein operates within amino-acid biosynthesis; L-methionine biosynthesis via de novo pathway; O-succinyl-L-homoserine from L-homoserine: step 1/1. In terms of biological role, transfers a succinyl group from succinyl-CoA to L-homoserine, forming succinyl-L-homoserine. This Cupriavidus pinatubonensis (strain JMP 134 / LMG 1197) (Cupriavidus necator (strain JMP 134)) protein is Homoserine O-succinyltransferase.